Here is a 286-residue protein sequence, read N- to C-terminus: Ribosomal RNA small subunit methyltransferase A (286 aa).

Residues Asn-33, Val-35, Gly-60, Glu-81, Asp-111, and Asn-129 each contribute to the S-adenosyl-L-methionine site.

It belongs to the class I-like SAM-binding methyltransferase superfamily. rRNA adenine N(6)-methyltransferase family. RsmA subfamily.

The protein localises to the cytoplasm. The catalysed reaction is adenosine(1518)/adenosine(1519) in 16S rRNA + 4 S-adenosyl-L-methionine = N(6)-dimethyladenosine(1518)/N(6)-dimethyladenosine(1519) in 16S rRNA + 4 S-adenosyl-L-homocysteine + 4 H(+). Specifically dimethylates two adjacent adenosines (A1518 and A1519) in the loop of a conserved hairpin near the 3'-end of 16S rRNA in the 30S particle. May play a critical role in biogenesis of 30S subunits. In Streptomyces coelicolor (strain ATCC BAA-471 / A3(2) / M145), this protein is Ribosomal RNA small subunit methyltransferase A.